We begin with the raw amino-acid sequence, 565 residues long: Probable protease Gilli_2517 (565 aa).

Probably a dedicated protease for substrate gasdermin bGSDM; cleaves the bGSDM precursor, releasing the pore-forming moiety, which integrates into the membrane and triggers cell death. Involved in defense against bacteriophages. Expression of bGSDM and this neighboring protease is not toxic in E.coli. The polypeptide is Probable protease Gilli_2517 (Gillisia limnaea (strain DSM 15749 / LMG 21470 / R-8282)).